Here is a 1085-residue protein sequence, read N- to C-terminus: Ankyrin repeat and IBR domain-containing protein 1 (1085 aa).

A lipid anchor (N-myristoyl glycine) is attached at Gly-2. ANK repeat units follow at residues 45–75 (QHNTPLHYAARHGMNRILGTFLFGRDGNPNK) and 145–174 (KKNTPLHYAAASGMKACVELLVKHGGDLFA). Residues 282–322 (CQRSGVQMPTPPPSGYNAWDTLPSPRTPRTTRSSVTSPDEI) are disordered. The span at 304-319 (PSPRTPRTTRSSVTSP) shows a compositional bias: low complexity. The segment at 330–570 (DTSLCDICMC…GGYYRCTRYE (241 aa)) is TRIAD supradomain. Zn(2+) contacts are provided by Cys-334, Cys-337, Cys-352, His-354, Cys-357, Cys-360, Cys-379, Cys-384, Cys-466, Cys-469, His-474, Cys-479, Cys-520, and Cys-523. The RING-type 1 zinc-finger motif lies at 334–384 (CDICMCSISVFEDPVDMPCGHDFCRGCWEAFLNLKIQEGEAHNIFCPAYEC). An IBR-type zinc finger spans residues 402–479 (DKRYLQFDIK…LGEAHEPCDC (78 aa)). The segment at 520–549 (CANCKSPIQKNEGCNHMQCAKCKYDFCWIC) adopts an RING-type 2; atypical zinc-finger fold. Residue Cys-533 is part of the active site. Zn(2+) contacts are provided by Cys-538, Cys-541, Cys-546, Cys-549, His-556, and Cys-566. A coiled-coil region spans residues 576 to 641 (EEQSKEMTVE…RALKETEGGC (66 aa)). Phosphoserine is present on Ser-738. Residues 764–808 (RRRHRQQRRRGDVHSLLSNPTDLDEPSESTFDLPEGSSGRRPGAS) are disordered. The UIM domain occupies 846 to 865 (EDDPNILLAIQLSLQESGLD). Residues Ser-879 and Ser-906 each carry the phosphoserine modification. 3 disordered regions span residues 884–907 (GSSLPSRLDSVPRSTESPRAALSS), 921–959 (GADSDPFSTDTLSSRPLSETRSDFCPSSSDLDSAGQDPS), and 1014–1085 (PPED…VHSV). Residues 926–959 (PFSTDTLSSRPLSETRSDFCPSSSDLDSAGQDPS) show a composition bias toward polar residues. A compositionally biased stretch (basic and acidic residues) spans 1018–1033 (SVSKDTGVHEGERAQM). Over residues 1068–1085 (ASQTPQTSSDWLEQVHSV) the composition is skewed to polar residues.

Belongs to the RBR family.

The catalysed reaction is [E2 ubiquitin-conjugating enzyme]-S-ubiquitinyl-L-cysteine + [acceptor protein]-L-lysine = [E2 ubiquitin-conjugating enzyme]-L-cysteine + [acceptor protein]-N(6)-ubiquitinyl-L-lysine.. Its function is as follows. Might act as an E3 ubiquitin-protein ligase, or as part of E3 complex, which accepts ubiquitin from specific E2 ubiquitin-conjugating enzymes and then transfers it to substrates. This is Ankyrin repeat and IBR domain-containing protein 1 (Ankib1) from Mus musculus (Mouse).